We begin with the raw amino-acid sequence, 386 residues long: ATP phosphoribosyltransferase regulatory subunit (386 aa).

It belongs to the class-II aminoacyl-tRNA synthetase family. HisZ subfamily. Heteromultimer composed of HisG and HisZ subunits.

It is found in the cytoplasm. Its pathway is amino-acid biosynthesis; L-histidine biosynthesis; L-histidine from 5-phospho-alpha-D-ribose 1-diphosphate: step 1/9. In terms of biological role, required for the first step of histidine biosynthesis. May allow the feedback regulation of ATP phosphoribosyltransferase activity by histidine. This chain is ATP phosphoribosyltransferase regulatory subunit, found in Limosilactobacillus fermentum (strain NBRC 3956 / LMG 18251) (Lactobacillus fermentum).